We begin with the raw amino-acid sequence, 1032 residues long: Integrin alpha-4 (1032 aa).

Residues 1-33 form the signal peptide; the sequence is MAWEARREPGPRRAAVRETVMLLLCLGVPTGRP. FG-GAP repeat units follow at residues 35 to 100, 110 to 177, 185 to 237, 238 to 291, 292 to 351, 355 to 412, and 416 to 478; these read NVDT…PGQT, NGEP…TELS, QDYV…KYKA, FLDK…EKEL, NILH…GAVM, ETNL…GISS, and QRIE…HPES. Residues 35 to 977 are Extracellular-facing; it reads NVDTESALLY…HHQRPKRYFT (943 aa). N-linked (GlcNAc...) asparagine glycosylation is present at asparagine 79. Cysteine 91 and cysteine 101 form a disulfide bridge. N-linked (GlcNAc...) asparagine glycosylation is present at asparagine 138. 2 disulfides stabilise this stretch: cysteine 144–cysteine 165 and cysteine 183–cysteine 198. Asparagine 229 carries an N-linked (GlcNAc...) asparagine glycan. Aspartate 314, asparagine 316, aspartate 318, aspartate 322, aspartate 377, aspartate 379, aspartate 381, aspartate 385, aspartate 439, aspartate 441, asparagine 443, tyrosine 445, and aspartate 447 together coordinate Ca(2+). N-linked (GlcNAc...) asparagine glycosylation occurs at asparagine 480. 2 disulfide bridges follow: cysteine 486–cysteine 495 and cysteine 501–cysteine 557. Asparagine 518 and asparagine 538 each carry an N-linked (GlcNAc...) asparagine glycan. Positions 606–616 match the SG1 motif; it reads KKEKDIMKKTI. Cysteine 622 and cysteine 627 are oxidised to a cystine. N-linked (GlcNAc...) asparagine glycosylation is found at asparagine 626, asparagine 645, and asparagine 660. The cysteines at positions 698 and 711 are disulfide-linked. 2 N-linked (GlcNAc...) asparagine glycosylation sites follow: asparagine 806 and asparagine 821. Disulfide bonds link cysteine 852–cysteine 890 and cysteine 897–cysteine 902. Residues 978–1001 traverse the membrane as a helical segment; the sequence is IVIISSSLLLGLIVLLLISYVMWK. Topologically, residues 1002–1032 are cytoplasmic; the sequence is AGFFKRQYKSILQEENRRDSWSYINSKSNDD. The GFFKR motif motif lies at 1003 to 1007; that stretch reads GFFKR. Position 1021 is a phosphoserine (serine 1021).

The protein belongs to the integrin alpha chain family. As to quaternary structure, heterodimer of an alpha and a beta subunit. The alpha subunit can sometimes be cleaved into two non-covalently associated fragments. Alpha-4 associates with either beta-1 or beta-7. Alpha-4 interacts with PXN, LPXN, and TGFB1I1/HIC5. Interacts with CSPG4 through CSPG4 chondroitin sulfate glycosaminoglycan. Interacts with JAML; integrin alpha-4/beta-1 may regulate leukocyte to endothelial cells adhesion by controlling JAML homodimerization. ITGA4:ITGB1 is found in a ternary complex with CX3CR1 and CX3CL1. Interacts with MDK. ITGA4:ITGB1 interacts with MDK; this interaction mediates MDK-induced osteoblast cells migration through PXN phosphorylation. Integrin ITGA4:ITGB1 interacts with SVEP1 (via Sushi domain 21); thereby inhibits Ca(2+) intracellular signaling and as a result represses vasocontraction. ITGA4:ITGB1 interacts with SELP. ITGA4:ITGB1 interacts with BCAM. In terms of processing, phosphorylation on Ser-1027 inhibits PXN binding. In terms of tissue distribution, expressed in vascular smooth muscle cells (at protein level).

The protein localises to the membrane. Its function is as follows. Integrins alpha-4/beta-1 (VLA-4) and alpha-4/beta-7 are receptors for fibronectin. They recognize one or more domains within the alternatively spliced CS-1 and CS-5 regions of fibronectin. They are also receptors for VCAM1. Integrin alpha-4/beta-1 recognizes the sequence Q-I-D-S in VCAM1. Integrin alpha-4/beta-7 is also a receptor for MADCAM1. It recognizes the sequence L-D-T in MADCAM1. On activated endothelial cells integrin VLA-4 triggers homotypic aggregation for most VLA-4-positive leukocyte cell lines. It may also participate in cytolytic T-cell interactions with target cells. ITGA4:ITGB1 binds to fractalkine (CX3CL1) and may act as its coreceptor in CX3CR1-dependent fractalkine signaling. ITGA4:ITGB1 binds to PLA2G2A via a site (site 2) which is distinct from the classical ligand-binding site (site 1) and this induces integrin conformational changes and enhanced ligand binding to site 1. Integrin ITGA4:ITGB1 represses PRKCA-mediated L-type voltage-gated channel Ca(2+) influx and ROCK-mediated calcium sensitivity in vascular smooth muscle cells via its interaction with SVEP1, thereby inhibiting vasocontraction. This chain is Integrin alpha-4 (ITGA4), found in Homo sapiens (Human).